A 729-amino-acid chain; its full sequence is Neurochondrin (729 aa).

S2 is subject to N-acetylserine. At S2 the chain carries Phosphoserine. At S2 the chain carries N-acetylalanine. S-palmitoyl cysteine attachment occurs at residues C3 and C4. Residue R75 is modified to Asymmetric dimethylarginine. S448 carries the post-translational modification Phosphoserine.

The protein belongs to the neurochondrin family. Interacts with MCHR1. Interacts with SEMA4C. Interacts with DIAPH1 (via FH3 domain). Interacts with GRM5. Post-translationally, palmitoylated. Palmitoylation by ZDHHC1, ZDHHC3 and ZDHHC11 regulates the association of NCDN with endosome membranes. May also be palmitoylated by ZDHHC7. In terms of tissue distribution, abundantly expressed in whole adult brain and in all individual brain regions examined, including spinal cord. Weakly expressed in ovary, testis, fetal brain and small intestine.

Its subcellular location is the cytoplasm. It is found in the cytosol. It localises to the endosome membrane. The protein localises to the cell projection. The protein resides in the dendrite. Its subcellular location is the postsynapse. In terms of biological role, probably involved in signal transduction in the nervous system, via increasing cell surface localization of GRM5/mGluR5 and positively regulating its signaling. Required for the spatial learning process. Acts as a negative regulator of Ca(2+)-calmodulin-dependent protein kinase 2 (CaMK2) phosphorylation. May play a role in modulating melanin-concentrating hormone-mediated functions via its interaction with MCHR1 that interferes with G protein-coupled signal transduction. May be involved in bone metabolism. May also be involved in neurite outgrowth. The protein is Neurochondrin of Homo sapiens (Human).